The primary structure comprises 471 residues: Dynein regulatory complex subunit 4 (471 aa).

The tract at residues 1 to 24 is disordered; the sequence is MAPKKKGTKKESKKDAVATGDIEG. 2 coiled-coil regions span residues 23–239 and 282–425; these read EGAS…YNDI and LSRA…DVAK.

It belongs to the DRC4 family. As to quaternary structure, component of the nexin-dynein regulatory complex (N-DRC). Interacts with DRC1, DRC2 and DRC5.

The protein localises to the cytoplasm. Its subcellular location is the cytoskeleton. It is found in the flagellum axoneme. The protein resides in the flagellum basal body. Component of the nexin-dynein regulatory complex (N-DRC), a key regulator of ciliary/flagellar motility which maintains the alignment and integrity of the distal axoneme and regulates microtubule sliding in motile axonemes. Plays an important role in the assembly of the N-DRC linker. This is Dynein regulatory complex subunit 4 from Chlamydomonas reinhardtii (Chlamydomonas smithii).